We begin with the raw amino-acid sequence, 438 residues long: MPSPPEPPLHWRDCRLEPILGFPRPRELAKSLEVQGEEWIALLESGGGLQHRSRYSFLAWGRRKSSETDAIRAYEELERLADDKCRALPCRSPTFFLVSYEAVVGEEPWLSRLVGRHEWPGMTAFSPEYVVVYDHAGGRVSVCPGDTPLPAPASRKESFSAEGPTYETSRKGFEAMVADALERIRAGEAFQVVLSRVERYRVWGSLFSAYERLADANPSPYLYYARLGGRVIIGSSPELLVKLEAGRVETHPIAGTRPRGSTPIEDIELEVELLNDEKERAEHVMLVDLARNDITRVSIPGTVQVTSFMDIERYETVMHIVSRVEGVTRPSTTFVEALKALHPAGTVSGAPKPRAMEIIAELEEEARGPYAGAIGVAGSSAGEAAIVLRSAWLLDDGETLEARAGAGIVYDSKPEREYMETVQKLGSLKRALGVDMCG.

L-tryptophan is bound by residues Ser45 and 220–222; that span reads PYL. 255 to 256 is a binding site for chorismate; it reads GT. Glu282 is a binding site for Mg(2+). Chorismate contacts are provided by residues Tyr370, Arg389, 405–407, and Gly407; that span reads GAG. Glu420 lines the Mg(2+) pocket.

This sequence belongs to the anthranilate synthase component I family. As to quaternary structure, heterotetramer consisting of two non-identical subunits: a beta subunit (TrpG) and a large alpha subunit (TrpE). Requires Mg(2+) as cofactor.

It catalyses the reaction chorismate + L-glutamine = anthranilate + pyruvate + L-glutamate + H(+). It functions in the pathway amino-acid biosynthesis; L-tryptophan biosynthesis; L-tryptophan from chorismate: step 1/5. With respect to regulation, feedback inhibited by tryptophan. Functionally, part of a heterotetrameric complex that catalyzes the two-step biosynthesis of anthranilate, an intermediate in the biosynthesis of L-tryptophan. In the first step, the glutamine-binding beta subunit (TrpG) of anthranilate synthase (AS) provides the glutamine amidotransferase activity which generates ammonia as a substrate that, along with chorismate, is used in the second step, catalyzed by the large alpha subunit of AS (TrpE) to produce anthranilate. In the absence of TrpG, TrpE can synthesize anthranilate directly from chorismate and high concentrations of ammonia. The chain is Anthranilate synthase component 1 (trpE) from Aeropyrum pernix (strain ATCC 700893 / DSM 11879 / JCM 9820 / NBRC 100138 / K1).